Consider the following 229-residue polypeptide: NAD(P)H-quinone oxidoreductase subunit K, chloroplastic (229 aa).

[4Fe-4S] cluster contacts are provided by Cys43, Cys44, Cys108, and Cys139.

The protein belongs to the complex I 20 kDa subunit family. As to quaternary structure, NDH is composed of at least 16 different subunits, 5 of which are encoded in the nucleus. The cofactor is [4Fe-4S] cluster.

The protein resides in the plastid. The protein localises to the chloroplast thylakoid membrane. It catalyses the reaction a plastoquinone + NADH + (n+1) H(+)(in) = a plastoquinol + NAD(+) + n H(+)(out). The catalysed reaction is a plastoquinone + NADPH + (n+1) H(+)(in) = a plastoquinol + NADP(+) + n H(+)(out). NDH shuttles electrons from NAD(P)H:plastoquinone, via FMN and iron-sulfur (Fe-S) centers, to quinones in the photosynthetic chain and possibly in a chloroplast respiratory chain. The immediate electron acceptor for the enzyme in this species is believed to be plastoquinone. Couples the redox reaction to proton translocation, and thus conserves the redox energy in a proton gradient. The protein is NAD(P)H-quinone oxidoreductase subunit K, chloroplastic of Coffea arabica (Arabian coffee).